Reading from the N-terminus, the 272-residue chain is Insulin-like growth factor-binding protein 1 (272 aa).

The signal sequence occupies residues 1-25 (MPEVPAAGLWPFLLLLAVQVSTVAS). The 82-residue stretch at 28 to 109 (QPWHCAPCSA…TRGQGACVPE (82 aa)) folds into the IGFBP N-terminal domain. Intrachain disulfides connect cysteine 32–cysteine 59, cysteine 35–cysteine 61, cysteine 43–cysteine 62, cysteine 50–cysteine 65, and cysteine 73–cysteine 86. A phosphoserine mark is found at serine 139, serine 157, and serine 169. Threonine 170 carries the phosphothreonine modification. Residue tyrosine 171 is modified to Phosphotyrosine. Residues 186-264 (KQPCRRELYK…SLEIRGDPNC (79 aa)) form the Thyroglobulin type-1 domain. 3 disulfide bridges follow: cysteine 189–cysteine 219, cysteine 230–cysteine 241, and cysteine 243–cysteine 264. Position 255 is a phosphoserine (serine 255). Positions 259 to 261 (RGD) match the Cell attachment site motif.

In terms of assembly, binds equally well IGF1 and IGF2. Interacts with integrin ITGA5:ITGB1. Interacts with VHL; this interaction inhibits HIF1A degradation.

Its subcellular location is the secreted. Its function is as follows. Multifunctional protein that plays a critical role in regulating the availability of IGFs such as IGF1 and IGF2 to their receptors and thereby regulates IGF-mediated cellular processes including cell migration, proliferation, differentiation or apoptosis in a cell-type specific manner. Also plays a positive role in cell migration by interacting with integrin ITGA5:ITGB1 through its RGD motif. Mechanistically, binding to integrins leads to activation of focal adhesion kinase/PTK2 and stimulation of the mitogen-activated protein kinase (MAPK) pathway. Regulates cardiomyocyte apoptosis by suppressing HIF-1alpha/HIF1A degradation through ubiquitination. The polypeptide is Insulin-like growth factor-binding protein 1 (IGFBP1) (Ictidomys tridecemlineatus (Thirteen-lined ground squirrel)).